Here is a 512-residue protein sequence, read N- to C-terminus: Immunoglobulin delta heavy chain (512 aa).

Ig-like domains follow at residues R1 to C97 and P135 to F227. Residues R1–S129 are variable (V) domain, involved in antigen recognition. Cystine bridges form between C22/C97 and C157/C213. Residues A130–M512 are constant (C) domain. A disordered region spans residues E225–P296. Over residues A235–A247 the composition is skewed to polar residues. S238 is a glycosylation site (O-linked (GalNAc...) serine). Residues T255, T256, T260, and T261 are each glycosylated (O-linked (GalNAc...) threonine). Over residues G267–T287 the composition is skewed to basic and acidic residues. Ig-like domains lie at P304–A392 and P396–E502. 2 cysteine pairs are disulfide-bonded: C319–C378 and C423–C484. N354, N445, and N496 each carry an N-linked (GlcNAc...) asparagine glycan.

As to quaternary structure, immunoglobulins are composed of two identical heavy chains and two identical light chains; disulfide-linked. An IgD molecule contains thus a delta heavy chain combined with either a kappa or a lambda light chains. Kappa light chains are found predominantly on the membrane IgD (mIgD) form and lambda on the secreted IgD (sIgD) form, this fact is poorly understood. Membrane-bound IgD molecules are non-covalently associated with a heterodimer of CD79A and CD79B.

The protein localises to the secreted. It is found in the cell membrane. Its function is as follows. Immunoglobulins, also known as antibodies, are membrane-bound or secreted glycoproteins produced by B lymphocytes. In the recognition phase of humoral immunity, the membrane-bound immunoglobulins serve as receptors which, upon binding of a specific antigen, trigger the clonal expansion and differentiation of B lymphocytes into immunoglobulins-secreting plasma cells. Secreted immunoglobulins mediate the effector phase of humoral immunity, which results in the elimination of bound antigens. The antigen binding site is formed by the variable domain of one heavy chain, together with that of its associated light chain. Thus, each immunoglobulin has two antigen binding sites with remarkable affinity for a particular antigen. The variable domains are assembled by a process called V-(D)-J rearrangement and can then be subjected to somatic hypermutations which, after exposure to antigen and selection, allow affinity maturation for a particular antigen. IgD is the major antigen receptor isotype on the surface of most peripheral B cells, where it is coexpressed with IgM. The membrane-bound IgD (mIgD) induces the phosphorylation of CD79A and CD79B by the Src family of protein tyrosine kinases. Soluble IgD (sIgD) concentration in serum is below those of IgG, IgA, and IgM but much higher than that of IgE. IgM and IgD molecules present on B cells have identical V regions and antigen-binding sites. After the antigen binds to the B cell receptor, the secreted form sIgD is shut off. IgD is a potent inducer of TNF, IL1B, and IL1RN. IgD also induces release of IL6, IL10, and LIF from peripheral blood mononuclear cells. Monocytes seem to be the main producers of cytokines in vitro in the presence of IgD. The sequence is that of Immunoglobulin delta heavy chain from Homo sapiens (Human).